We begin with the raw amino-acid sequence, 93 residues long: uncharacterized protein (93 aa).

Residues 1-76 (MDSHTTEKRR…IQTIEPDESM (76 aa)) enclose the Sm domain.

Part of the core SMN complex at least composed of smn1, yip11/gem2, gem6, gem7 and gem8. Interacts with gem7; the interaction is direct.

Functionally, the SMN complex catalyzes the assembly of small nuclear ribonucleoproteins (snRNPs), the building blocks of the spliceosome, and thereby plays an important role in the splicing of cellular pre-mRNAs. Most spliceosomal snRNPs contain a common set of Sm proteins smb1, smd1, smd2, smd3, sme1, smf1 and smg1 that assemble in a heptameric protein ring on the Sm site of the small nuclear RNA to form the core snRNP (Sm core). In the cytosol, the Sm proteins smd1, smd2, sme1, smf1 and smg1 (5Sm) are trapped in an inactive 6S pICln-Sm complex by the chaperone saf5. To complete assembly of core snRNPs, the SMN complex accepts 5Sm from saf5. Binding of snRNA inside 5Sm triggers eviction of the SMN complex, thereby allowing binding of smd3 and smb1 to complete assembly of the core snRNP. This is an uncharacterized protein from Schizosaccharomyces pombe (strain 972 / ATCC 24843) (Fission yeast).